A 99-amino-acid chain; its full sequence is Ferredoxin-2 (99 aa).

Residues 4–96 (YQVRLINKKR…DCTIRTHQEA (93 aa)) form the 2Fe-2S ferredoxin-type domain. Residues C42, C47, C50, and C80 each contribute to the [2Fe-2S] cluster site.

The protein belongs to the 2Fe2S plant-type ferredoxin family. It depends on [2Fe-2S] cluster as a cofactor.

Functionally, ferredoxins are iron-sulfur proteins that transfer electrons in a wide variety of metabolic reactions. Donates electrons to the nitrogenase. The polypeptide is Ferredoxin-2 (fdxH) (Leptolyngbya boryana (Plectonema boryanum)).